A 467-amino-acid chain; its full sequence is Histidine--tRNA ligase (467 aa).

The protein belongs to the class-II aminoacyl-tRNA synthetase family. As to quaternary structure, homodimer.

The protein resides in the cytoplasm. The catalysed reaction is tRNA(His) + L-histidine + ATP = L-histidyl-tRNA(His) + AMP + diphosphate + H(+). The polypeptide is Histidine--tRNA ligase (Gloeobacter violaceus (strain ATCC 29082 / PCC 7421)).